The following is a 232-amino-acid chain: Protein FAM228B (232 aa).

The protein belongs to the FAM228 family.

The chain is Protein FAM228B (Fam228b) from Mus musculus (Mouse).